Reading from the N-terminus, the 132-residue chain is Small integral membrane protein 33 (132 aa).

The disordered stretch occupies residues 1-28 (MHQAGHYSWPSPAVNSSSEQEPQRQLPE). N-linked (GlcNAc...) asparagine glycosylation occurs at asparagine 15. Residues 43 to 63 (PVVTVIVAVFVLLAVCIIVAV) form a helical membrane-spanning segment. Residues 99 to 132 (PQDSPEEAPPGPLVPGSCPAPDGPRPSIDEVTCL) form a disordered region.

The protein localises to the membrane. In Homo sapiens (Human), this protein is Small integral membrane protein 33.